A 238-amino-acid polypeptide reads, in one-letter code: Large ribosomal subunit protein uL2 (238 aa).

Residues 197–219 (ASDHPFGGKRHSNHSKPFTVSKW) form a disordered region.

Belongs to the universal ribosomal protein uL2 family. As to quaternary structure, part of the 50S ribosomal subunit. Forms a bridge to the 30S subunit in the 70S ribosome.

Functionally, one of the primary rRNA binding proteins. Required for association of the 30S and 50S subunits to form the 70S ribosome, for tRNA binding and peptide bond formation. It has been suggested to have peptidyltransferase activity; this is somewhat controversial. Makes several contacts with the 16S rRNA in the 70S ribosome. The polypeptide is Large ribosomal subunit protein uL2 (Nanoarchaeum equitans (strain Kin4-M)).